The following is a 299-amino-acid chain: Taste receptor type 2 member 4 (299 aa).

Residues 1–9 (MLQLFYFSA) are Extracellular-facing. A helical membrane pass occupies residues 10-30 (IIASVILNFVGIIMNLFIMVV). Topologically, residues 31–46 (NCKTWVKSHRISSSDR) are cytoplasmic. A helical membrane pass occupies residues 47 to 67 (ILFSLGITRFLMLGLFLVNTI). Residues 68–81 (FFVSSNTERSVYLS) lie on the Extracellular side of the membrane. A helical transmembrane segment spans residues 82-102 (AFFVLCFMFXDSSSLWFVTLL). The Cytoplasmic portion of the chain corresponds to 103–131 (NILYCVKITNFQHSVFLLLKQNISPKIPR). A helical transmembrane segment spans residues 132-152 (LLLACVLISAFTTCLYITLSQ). The Extracellular portion of the chain corresponds to 153 to 172 (ASPFPELVTKRNNTSFNTHE). Residues asparagine 164 and asparagine 165 are each glycosylated (N-linked (GlcNAc...) asparagine). Residues 173 to 193 (GILSLVVSLVLSSSLQFIINV) form a helical membrane-spanning segment. At 194–230 (TSASLLIHSLRRHIQKMQKNATGFWNPQTEAHVGAMK) the chain is on the cytoplasmic side. A helical transmembrane segment spans residues 231 to 251 (LMIYFLILYIPYSVATLVQYL). Residues 252-262 (PFYVGMDMGTK) lie on the Extracellular side of the membrane. Residues 263–283 (AICLIFATLYSPGHSVLIIIT) form a helical membrane-spanning segment. Residues 284-299 (HPKLKTTAKKILCFKK) are Cytoplasmic-facing.

Belongs to the G-protein coupled receptor T2R family.

Its subcellular location is the membrane. It localises to the cell projection. It is found in the cilium membrane. In terms of biological role, gustducin-coupled receptor implicated in the perception of bitter compounds in the oral cavity and the gastrointestinal tract. Signals through PLCB2 and the calcium-regulated cation channel TRPM5. In airway epithelial cells, binding of denatonium increases the intracellular calcium ion concentration and stimulates ciliary beat frequency. This chain is Taste receptor type 2 member 4 (TAS2R4), found in Pongo pygmaeus (Bornean orangutan).